Consider the following 395-residue polypeptide: Elongation factor Tu (395 aa).

Positions 10 to 204 (KPHVNIGTIG…AVDNYIPHPV (195 aa)) constitute a tr-type G domain. Positions 19–26 (GHVDHGKT) are G1. 19–26 (GHVDHGKT) lines the GTP pocket. A Mg(2+)-binding site is contributed by threonine 26. The tract at residues 60–64 (GITIS) is G2. The G3 stretch occupies residues 81-84 (DCPG). Residues 81–85 (DCPGH) and 136–139 (NKVD) each bind GTP. Positions 136–139 (NKVD) are G4. Residues 174–176 (SAL) are G5.

This sequence belongs to the TRAFAC class translation factor GTPase superfamily. Classic translation factor GTPase family. EF-Tu/EF-1A subfamily. Monomer.

Its subcellular location is the cytoplasm. It catalyses the reaction GTP + H2O = GDP + phosphate + H(+). Functionally, GTP hydrolase that promotes the GTP-dependent binding of aminoacyl-tRNA to the A-site of ribosomes during protein biosynthesis. The chain is Elongation factor Tu from Rickettsia akari (strain Hartford).